A 264-amino-acid polypeptide reads, in one-letter code: Glutamate racemase (264 aa).

Residues 10–11 (DS) and 42–43 (YG) each bind substrate. The active-site Proton donor/acceptor is the C73. 74–75 (NT) is a binding site for substrate. C183 acts as the Proton donor/acceptor in catalysis. 184–185 (TH) lines the substrate pocket.

This sequence belongs to the aspartate/glutamate racemases family.

It carries out the reaction L-glutamate = D-glutamate. It participates in cell wall biogenesis; peptidoglycan biosynthesis. Its function is as follows. Provides the (R)-glutamate required for cell wall biosynthesis. The protein is Glutamate racemase of Streptococcus pyogenes serotype M6 (strain ATCC BAA-946 / MGAS10394).